The sequence spans 344 residues: Nuclear distribution protein nudE-like 1-B (344 aa).

Residues 26 to 189 are a coiled coil; it reads YKKSCHDAQE…ELAVRERTSD (164 aa).

Belongs to the nudE family. In terms of processing, phosphorylated in mitosis.

The protein resides in the cytoplasm. The protein localises to the cytoskeleton. Its subcellular location is the microtubule organizing center. It is found in the centrosome. It localises to the spindle. In terms of biological role, required for organization of the cellular microtubule array and microtubule anchoring at the centrosome. Positively regulates the activity of the minus-end directed microtubule motor protein dynein. May enhance dynein-mediated microtubule sliding by targeting dynein to the microtubule plus end. The polypeptide is Nuclear distribution protein nudE-like 1-B (ndel1b) (Danio rerio (Zebrafish)).